A 351-amino-acid chain; its full sequence is Short-chain dehydrogenase sdnK (351 aa).

The NADP(+) site is built by I46, T66, E98, Y224, K228, and T268. The Proton donor role is filled by Y224. Catalysis depends on K228, which acts as the Lowers pKa of active site Tyr.

This sequence belongs to the short-chain dehydrogenases/reductases (SDR) family.

The protein operates within antibiotic biosynthesis. Functionally, short-chain dehydrogenase; part of the gene cluster that mediates the biosynthesis of sordarin and hypoxysordarin, glycoside antibiotics with a unique tetracyclic diterpene aglycone structure. First, the geranylgeranyl diphosphate synthase sdnC constructs GGDP from farnesyl diphosphate and isopentenyl diphosphate. The diterpene cyclase sdnA then catalyzes the cyclization of GGDP to afford cycloaraneosene. Cycloaraneosene is then hydroxylated four times by the putative cytochrome P450 monooxygenases sdnB, sdnE, sdnF and sdnH to give a hydroxylated cycloaraneosene derivative such as cycloaraneosene-8,9,13,19-tetraol. Although the order of the hydroxylations is unclear, at least C8, C9 and C13 of the cycloaraneosene skeleton are hydroxylated before the sordaricin formation. Dehydration of the 13-hydroxy group of the hydroxylated cycloaraneosene derivative might be catalyzed by an unassigned hypothetical protein such as sdnG and sdnP to construct the cyclopentadiene moiety. The FAD-dependent oxidoreductase sdnN is proposed to catalyze the oxidation at C9 of the hydroxylated cycloaraneosene derivative and also catalyze the Baeyer-Villiger oxidation to give the lactone intermediate. The presumed lactone intermediate would be hydrolyzed to give an acrolein moiety and a carboxylate moiety. Then, [4+2]cycloaddition would occur between the acrolein moiety and the cyclopentadiene moiety to give sordaricin. SdnN might also be involved in the [4+2]cycloaddition after the hypothesized oxidation to accommodate the oxidized product and prompt the [4+2]cycloaddition. GDP-6-deoxy-D-altrose may be biosynthesized from GDP-D-mannose by the putative GDP-mannose-4,6-dehydratase sdnI and the short-chain dehydrogenase sdnK. The glycosyltransferase sdnJ catalyzes the attachment of 6-deoxy-D-altrose onto the 19-hydroxy group of sordaricin to give 4'-O-demethylsordarin. The methyltransferase sdnD would complete the biosynthesis of sordarin. Sordarin can be further modified into hypoxysordarin. The unique acyl chain at the 3'-hydroxy group of hypoxysordarin would be constructed by an iterative type I PKS sdnO and the trans-acting polyketide methyltransferase sdnL. SdnL would be responsible for the introduction of an alpha-methyl group of the polyketide chain. Alternatively, the beta-lactamase-like protein sdnR might be responsible for the cleavage and transfer of the polyketide chain from the PKS sdnO to sordarin. Two putative cytochrome P450 monooxygenases, sdnQ and sdnT, might catalyze the epoxidations of the polyketide chain to complete the biosynthesis of hypoxysordarin. Transcriptional regulators sdnM and sdnS are presumably encoded for the transcriptional regulation of the expression of the sdn gene cluster. This is Short-chain dehydrogenase sdnK from Sordaria araneosa (Pleurage araneosa).